The primary structure comprises 389 residues: Carbamoyl phosphate synthase small chain (389 aa).

A CPSase region spans residues 1–199; it reads MFNPAILVLA…AGKPFNLQTT (199 aa). 3 residues coordinate L-glutamine: serine 50, glycine 251, and glycine 253. A Glutamine amidotransferase type-1 domain is found at 203 to 389; that stretch reads HVVAYDFGIK…FINAVQATKA (187 aa). Cysteine 279 serves as the catalytic Nucleophile. Residues leucine 280, glutamine 283, asparagine 321, glycine 323, and phenylalanine 324 each coordinate L-glutamine. Active-site residues include histidine 363 and glutamate 365.

Belongs to the CarA family. As to quaternary structure, composed of two chains; the small (or glutamine) chain promotes the hydrolysis of glutamine to ammonia, which is used by the large (or ammonia) chain to synthesize carbamoyl phosphate. Tetramer of heterodimers (alpha,beta)4.

The enzyme catalyses hydrogencarbonate + L-glutamine + 2 ATP + H2O = carbamoyl phosphate + L-glutamate + 2 ADP + phosphate + 2 H(+). The catalysed reaction is L-glutamine + H2O = L-glutamate + NH4(+). It participates in amino-acid biosynthesis; L-arginine biosynthesis; carbamoyl phosphate from bicarbonate: step 1/1. It functions in the pathway pyrimidine metabolism; UMP biosynthesis via de novo pathway; (S)-dihydroorotate from bicarbonate: step 1/3. Its function is as follows. Small subunit of the glutamine-dependent carbamoyl phosphate synthetase (CPSase). CPSase catalyzes the formation of carbamoyl phosphate from the ammonia moiety of glutamine, carbonate, and phosphate donated by ATP, constituting the first step of 2 biosynthetic pathways, one leading to arginine and/or urea and the other to pyrimidine nucleotides. The small subunit (glutamine amidotransferase) binds and cleaves glutamine to supply the large subunit with the substrate ammonia. This chain is Carbamoyl phosphate synthase small chain, found in Haemophilus ducreyi (strain 35000HP / ATCC 700724).